The primary structure comprises 2399 residues: Protein DOP1A (2399 aa).

Disordered regions lie at residues 556-598 (PSGQ…SSES), 619-660 (NGQG…GAAG), 1105-1124 (SDSG…EVDP), 1166-1188 (SVTS…PGKE), 1234-1263 (SPCI…HSSI), and 1279-1308 (ETIV…KKKA). Composition is skewed to low complexity over residues 629–647 (GSTS…EETV) and 1105–1116 (SDSGCSQSSAGD). 2 stretches are compositionally biased toward polar residues: residues 1166–1180 (SVTS…QTKS) and 1234–1252 (SPCI…VPSE). Ser-1261 is modified (phosphoserine).

The protein belongs to the DOP1 family.

It localises to the golgi apparatus membrane. May be involved in protein traffic between late Golgi and early endosomes. This Mus musculus (Mouse) protein is Protein DOP1A (Dop1a).